The chain runs to 159 residues: D-aminoacyl-tRNA deacylase (159 aa).

Positions 142–143 match the Gly-cisPro motif, important for rejection of L-amino acids motif; that stretch reads GP.

It belongs to the DTD family. As to quaternary structure, homodimer.

It localises to the cytoplasm. The catalysed reaction is glycyl-tRNA(Ala) + H2O = tRNA(Ala) + glycine + H(+). The enzyme catalyses a D-aminoacyl-tRNA + H2O = a tRNA + a D-alpha-amino acid + H(+). An aminoacyl-tRNA editing enzyme that deacylates mischarged D-aminoacyl-tRNAs. Also deacylates mischarged glycyl-tRNA(Ala), protecting cells against glycine mischarging by AlaRS. Acts via tRNA-based rather than protein-based catalysis; rejects L-amino acids rather than detecting D-amino acids in the active site. By recycling D-aminoacyl-tRNA to D-amino acids and free tRNA molecules, this enzyme counteracts the toxicity associated with the formation of D-aminoacyl-tRNA entities in vivo and helps enforce protein L-homochirality. The polypeptide is D-aminoacyl-tRNA deacylase (Albidiferax ferrireducens (strain ATCC BAA-621 / DSM 15236 / T118) (Rhodoferax ferrireducens)).